The primary structure comprises 216 residues: Cytochrome c biogenesis ATP-binding export protein CcmA (216 aa).

Positions 5–216 (ISVDTLLSAS…RKIRLDYRFV (212 aa)) constitute an ABC transporter domain. 43–50 (GPNGAGKT) contributes to the ATP binding site.

It belongs to the ABC transporter superfamily. CcmA exporter (TC 3.A.1.107) family. The complex is composed of two ATP-binding proteins (CcmA) and two transmembrane proteins (CcmB).

Its subcellular location is the cell inner membrane. The catalysed reaction is heme b(in) + ATP + H2O = heme b(out) + ADP + phosphate + H(+). Its function is as follows. Part of the ABC transporter complex CcmAB involved in the biogenesis of c-type cytochromes; once thought to export heme, this seems not to be the case, but its exact role is uncertain. Responsible for energy coupling to the transport system. The chain is Cytochrome c biogenesis ATP-binding export protein CcmA from Shewanella oneidensis (strain ATCC 700550 / JCM 31522 / CIP 106686 / LMG 19005 / NCIMB 14063 / MR-1).